Reading from the N-terminus, the 76-residue chain is Large ribosomal subunit protein eL20 (76 aa).

The protein belongs to the eukaryotic ribosomal protein eL20 family. In terms of assembly, part of the 50S ribosomal subunit. Binds 23S rRNA.

This is Large ribosomal subunit protein eL20 from Methanococcus maripaludis (strain C5 / ATCC BAA-1333).